Reading from the N-terminus, the 281-residue chain is 2-dehydro-3-deoxyphosphooctonate aldolase (281 aa).

This sequence belongs to the KdsA family.

The protein localises to the cytoplasm. It catalyses the reaction D-arabinose 5-phosphate + phosphoenolpyruvate + H2O = 3-deoxy-alpha-D-manno-2-octulosonate-8-phosphate + phosphate. Its pathway is carbohydrate biosynthesis; 3-deoxy-D-manno-octulosonate biosynthesis; 3-deoxy-D-manno-octulosonate from D-ribulose 5-phosphate: step 2/3. It participates in bacterial outer membrane biogenesis; lipopolysaccharide biosynthesis. The chain is 2-dehydro-3-deoxyphosphooctonate aldolase from Pseudomonas savastanoi pv. phaseolicola (strain 1448A / Race 6) (Pseudomonas syringae pv. phaseolicola (strain 1448A / Race 6)).